Consider the following 342-residue polypeptide: Phosphoribosylformylglycinamidine cyclo-ligase (342 aa).

It belongs to the AIR synthase family.

Its subcellular location is the cytoplasm. It catalyses the reaction 2-formamido-N(1)-(5-O-phospho-beta-D-ribosyl)acetamidine + ATP = 5-amino-1-(5-phospho-beta-D-ribosyl)imidazole + ADP + phosphate + H(+). It functions in the pathway purine metabolism; IMP biosynthesis via de novo pathway; 5-amino-1-(5-phospho-D-ribosyl)imidazole from N(2)-formyl-N(1)-(5-phospho-D-ribosyl)glycinamide: step 2/2. This chain is Phosphoribosylformylglycinamidine cyclo-ligase, found in Staphylococcus aureus (strain MSSA476).